A 124-amino-acid polypeptide reads, in one-letter code: Fluoride-specific ion channel FluC (124 aa).

The next 4 membrane-spanning stretches (helical) occupy residues 4-24 (LLLV…ISIF), 35-55 (FGTL…YALG), 60-80 (ISPE…TTFS), and 102-122 (VVLN…LVFS). Positions 74 and 77 each coordinate Na(+).

The protein belongs to the fluoride channel Fluc/FEX (TC 1.A.43) family.

The protein localises to the cell inner membrane. It carries out the reaction fluoride(in) = fluoride(out). Its activity is regulated as follows. Na(+) is not transported, but it plays an essential structural role and its presence is essential for fluoride channel function. In terms of biological role, fluoride-specific ion channel. Important for reducing fluoride concentration in the cell, thus reducing its toxicity. This is Fluoride-specific ion channel FluC from Shewanella baltica (strain OS223).